A 119-amino-acid chain; its full sequence is uncharacterized protein (119 aa).

It is found in the mitochondrion. This is an uncharacterized protein from Arabidopsis thaliana (Mouse-ear cress).